A 495-amino-acid chain; its full sequence is Adenosylhomocysteinase (495 aa).

Residues T71, D156, and E218 each contribute to the substrate site. 219–221 (TTT) serves as a coordination point for NAD(+). The substrate site is built by K248 and D252. Residues N253, 282–287 (GYGDVG), E305, N340, 361–363 (IGH), and N409 each bind NAD(+).

This sequence belongs to the adenosylhomocysteinase family. Requires NAD(+) as cofactor.

It localises to the cytoplasm. The enzyme catalyses S-adenosyl-L-homocysteine + H2O = L-homocysteine + adenosine. The protein operates within amino-acid biosynthesis; L-homocysteine biosynthesis; L-homocysteine from S-adenosyl-L-homocysteine: step 1/1. In terms of biological role, may play a key role in the regulation of the intracellular concentration of adenosylhomocysteine. This Mycobacterium tuberculosis (strain ATCC 25177 / H37Ra) protein is Adenosylhomocysteinase.